The chain runs to 207 residues: Ras-related protein Rab-8B (207 aa).

10 residues coordinate GTP: Ser17, Gly18, Val19, Gly20, Lys21, Thr22, Cys23, Thr35, Ser39, and Thr40. Residue Thr22 participates in Mg(2+) binding. 2 short sequence motifs (switch) span residues 31-45 (DAFNTTFISTIGIDF) and 63-80 (DTAGQERFRTITTAYYRG). Mg(2+) contacts are provided by Thr40 and Asp63. Gly66 is a GTP binding site. Thr72 bears the Phosphothreonine; by LRRK2 mark. Residues Asn121, Lys122, Asp124, Ala152, and Lys153 each contribute to the GTP site. Ser180 carries the phosphoserine modification. Cys204 carries the post-translational modification Cysteine methyl ester. Residue Cys204 is the site of S-geranylgeranyl cysteine attachment. Residues 205-207 (SLL) constitute a propeptide, removed in mature form.

The protein belongs to the small GTPase superfamily. Rab family. Associated with actin, delta-catenin and alpha and beta tubulins. Interacts with OTOF. Interacts with PEX5R. Interacts with RAB3IP. Interacts with VIM. Interacts with CDH1. Interacts with MICALL2. Interacts with GDI1, GDI2, CHML and CHM; phosphorylation at Thr-72 disrupts these interactions. Interacts with MICAL1. Mg(2+) serves as cofactor. Post-translationally, phosphorylation of Thr-72 in the switch II region by LRRK2 prevents the association of RAB regulatory proteins, including CHM, CHML and RAB GDP dissociation inhibitors GDI1 and GDI2.

It localises to the cell membrane. The protein localises to the cytoplasmic vesicle. The protein resides in the phagosome. Its subcellular location is the phagosome membrane. It is found in the endosome membrane. The enzyme catalyses GTP + H2O = GDP + phosphate + H(+). With respect to regulation, regulated by guanine nucleotide exchange factors (GEFs) including RAB3IP/RABIN8 which promotes the exchange of bound GDP for free GTP. Regulated by GTPase activating proteins (GAPs) which increase the GTP hydrolysis activity. Inhibited by GDP dissociation inhibitors (GDIs). Its function is as follows. The small GTPases Rab are key regulators of intracellular membrane trafficking, from the formation of transport vesicles to their fusion with membranes. Rabs cycle between an inactive GDP-bound form and an active GTP-bound form that is able to recruit to membranes different sets of downstream effectors directly responsible for vesicle formation, movement, tethering and fusion. RAB8B may be involved in polarized vesicular trafficking and neurotransmitter release. May participate in cell junction dynamics in Sertoli cells. May also participate in the export of a subset of neosynthesized proteins through a Rab8-Rab10-Rab11-dependent endososomal export route. This is Ras-related protein Rab-8B from Homo sapiens (Human).